Consider the following 827-residue polypeptide: Periplasmic nitrate reductase (827 aa).

The tat-type signal signal peptide spans Met-1–Ala-32. Residues Ile-37 to Asp-93 enclose the 4Fe-4S Mo/W bis-MGD-type domain. [4Fe-4S] cluster-binding residues include Cys-44, Cys-47, Cys-51, and Cys-79. Residues Lys-81, Gln-148, Asn-173, Cys-177, Trp-210 to Met-217, Ser-242 to His-246, Gln-261 to Asp-263, Met-372, Gln-376, Asn-482, Ser-508 to Asp-509, Lys-531, Asp-558, and Thr-717 to Thr-726 contribute to the Mo-bis(molybdopterin guanine dinucleotide) site. Phe-793 is a substrate binding site. Mo-bis(molybdopterin guanine dinucleotide) is bound by residues Asn-801 and Lys-818.

The protein belongs to the prokaryotic molybdopterin-containing oxidoreductase family. NasA/NapA/NarB subfamily. Component of the periplasmic nitrate reductase NapAB complex composed of NapA and NapB. [4Fe-4S] cluster serves as cofactor. It depends on Mo-bis(molybdopterin guanine dinucleotide) as a cofactor. Predicted to be exported by the Tat system. The position of the signal peptide cleavage has not been experimentally proven.

It is found in the periplasm. The catalysed reaction is 2 Fe(II)-[cytochrome] + nitrate + 2 H(+) = 2 Fe(III)-[cytochrome] + nitrite + H2O. Its function is as follows. Catalytic subunit of the periplasmic nitrate reductase complex NapAB. Receives electrons from NapB and catalyzes the reduction of nitrate to nitrite. This chain is Periplasmic nitrate reductase, found in Histophilus somni (strain 2336) (Haemophilus somnus).